Reading from the N-terminus, the 299-residue chain is Acetyl-hydrolase (299 aa).

An Involved in the stabilization of the negatively charged intermediate by the formation of the oxyanion hole motif is present at residues 73 to 75 (HGG). Active-site residues include Ser-143, Glu-237, and His-267.

It belongs to the 'GDXG' lipolytic enzyme family.

Its pathway is secondary metabolite biosynthesis; bialaphos biosynthesis. This protein removes the N-acetyl group from bialaphos as one of the final steps of biosynthesis of phosphinothricin tripeptide (PTT), also known as bialaphos (BA), a natural-product antibiotic and potent herbicide. The sequence is that of Acetyl-hydrolase (bah) from Streptomyces hygroscopicus.